A 1031-amino-acid chain; its full sequence is Receptor-like protein EIX1 (1031 aa).

The signal sequence occupies residues 1–29 (MDKWKYARLAQFLFTLSLLFLETSFGLGG). Residue Asn30 is glycosylated (N-linked (GlcNAc...) asparagine). The segment at 30 to 113 (NKTLCLDKER…PRLTGKLSPS (84 aa)) is N-cap. Residues 30-971 (NKTLCLDKER…DEEEEFPSLE (942 aa)) lie on the Extracellular side of the membrane. The LRR 1 repeat unit spans residues 117–140 (LEYLNYLDLSVNEFERSEIPRFIG). Residues 142–165 (LKRLEYLNLSASFFSGVIPIQFQN) form an LRR 2; degenerate repeat. N-linked (GlcNAc...) asparagine glycans are attached at residues Asn149 and Asn165. LRR repeat units lie at residues 166–189 (LTSL…WLSH), 191–215 (SSLE…ITKV), 216–240 (PSLK…DLAN), and 243–266 (LISL…SWVF). An N-linked (GlcNAc...) asparagine glycan is attached at Asn240. N-linked (GlcNAc...) asparagine glycosylation occurs at Asn267. LRR repeat units lie at residues 269-292 (TTSL…RFGT), 293-317 (LMYL…SFGN), 318-341 (LTRL…LFLR), 346-369 (RKSL…ATRF), 370-393 (SSLK…AGQV), 394-416 (STLE…LALF), 417-440 (PSLR…IGKL), 441-463 (SQLR…MGQL), 465-487 (NLES…HLSN), 488-509 (LSSL…SFNW), 512-536 (PFQL…LQNQ), 538-559 (NYTV…WFSS), 561-584 (PPDL…LIEN), and 586-611 (YGYR…NVQI). An N-linked (GlcNAc...) asparagine glycan is attached at Asn317. N-linked (GlcNAc...) asparagine glycosylation is found at Asn365 and Asn383. N-linked (GlcNAc...) asparagine glycosylation is present at Asn487. Residues Asn538, Asn568, and Asn597 are each glycosylated (N-linked (GlcNAc...) asparagine). An LRR 21; degenerate repeat occupies 612–629 (FYLHKNQFFGSISSICRS). 6 LRR repeats span residues 630-654 (RTSP…WMNM), 655-678 (TSLA…LGSL), 679-703 (TNLK…QCQG), 705-725 (QILD…IGTD), 726-750 (LLNL…ICQL), and 752-773 (FLQI…CFNN). 2 N-linked (GlcNAc...) asparagine glycosylation sites follow: Asn653 and Asn666. N-linked (GlcNAc...) asparagine glycans are attached at residues Asn773 and Asn781. 4 LRR repeats span residues 823 to 847 (LLYL…IADM), 848 to 871 (RGLK…IGQM), 872 to 895 (RMLE…LANL), and 896 to 918 (TFLS…STQL). N-linked (GlcNAc...) asparagine glycosylation is found at Asn854, Asn861, and Asn894. A C-cap/acidic domain region spans residues 919–971 (QSFDRSSYSDNAQLCGPPLQECPGYAPPSPLIDHGSNNNPQEHDEEEEFPSLE). A helical membrane pass occupies residues 972–992 (FYISMVLSFFVAFWGILGCLI). Residues 993-1031 (VNSSWRNAYFKFLTDTTSWLDMISRVWFARLKKKLRRAR) lie on the Cytoplasmic side of the membrane.

This sequence belongs to the RLP family. In terms of assembly, interacts with EIX elicitor protein.

The protein resides in the cell membrane. Involved in plant defense. Confers resistance to the fungal pathogen T.viride through recognition of the EIX elicitor protein. This is Receptor-like protein EIX1 from Solanum lycopersicum (Tomato).